We begin with the raw amino-acid sequence, 348 residues long: tRNA pseudouridine synthase D (348 aa).

Residue Asp81 is the Nucleophile of the active site. In terms of domain architecture, TRUD spans 158 to 304; that stretch reads GVPNYFGAQR…MRHERRSIEL (147 aa).

The protein belongs to the pseudouridine synthase TruD family.

The enzyme catalyses uridine(13) in tRNA = pseudouridine(13) in tRNA. Responsible for synthesis of pseudouridine from uracil-13 in transfer RNAs. This Aliivibrio salmonicida (strain LFI1238) (Vibrio salmonicida (strain LFI1238)) protein is tRNA pseudouridine synthase D.